Here is a 447-residue protein sequence, read N- to C-terminus: MIKIYDTMTRSLRKFVPLTENTVNMYVCGPTVYNYIHIGNARSAVAFDTIRRYFEYTGYQVNYISNFTDVDDKIIKAATQAGVSPKELSDRFIAAFIEDTKALGVKPATQNPRVMDYIAEIISFVESLIEKDFAYEADGDVYFRVEKSEHYAKLANKTLSELEVGASGRTDAETALKENPLDFALWKSAKAGEVSWDSPWGFGRPGWHIECSVMATEILGDTIDIHGGGADLEFPHHTNEIAQSEAKTGKTFANYWMHNGFVTVDNEKMSKSLGNFVTVHDMLQTVDGQVLRFFLATQQYRKPINFTEKAIHDAEINLKYLKNTLQQPLTETADEQELKQFVIAFQDAMDDDFNTANGITVVFDMAKWINSGSYTEPVKSAFEKMLAVFGIIFEEEVLEVDIEALIAKRQEARANRDFAIADAIRDQLAAQGIKLLDTKDGVRWLRD.

Cysteine 28 serves as a coordination point for Zn(2+). The short motif at 30–40 is the 'HIGH' region element; that stretch reads PTVYNYIHIGN. 3 residues coordinate Zn(2+): cysteine 211, histidine 236, and glutamate 240. A 'KMSKS' region motif is present at residues 268-272; the sequence is KMSKS. Position 271 (lysine 271) interacts with ATP.

This sequence belongs to the class-I aminoacyl-tRNA synthetase family. Monomer. Zn(2+) is required as a cofactor.

It localises to the cytoplasm. It catalyses the reaction tRNA(Cys) + L-cysteine + ATP = L-cysteinyl-tRNA(Cys) + AMP + diphosphate. This chain is Cysteine--tRNA ligase, found in Streptococcus pyogenes serotype M28 (strain MGAS6180).